We begin with the raw amino-acid sequence, 46 residues long: Protein krueppel (46 aa).

3 C2H2-type zinc fingers span residues 1–4 (MRLH), 10–32 (YQCLHCDRHFVQVANLRRHLRVH), and 38–46 (YACEICPSR).

The protein belongs to the krueppel C2H2-type zinc-finger protein family.

It localises to the nucleus. Its function is as follows. Krueppel is a gap class segmentation protein. The chain is Protein krueppel (Kr) from Pholcus phalangioides (Longbodied cellar spider).